The primary structure comprises 104 residues: Large ribosomal subunit protein uL23 (104 aa).

The protein belongs to the universal ribosomal protein uL23 family. In terms of assembly, part of the 50S ribosomal subunit. Contacts protein L29, and trigger factor when it is bound to the ribosome.

One of the early assembly proteins it binds 23S rRNA. One of the proteins that surrounds the polypeptide exit tunnel on the outside of the ribosome. Forms the main docking site for trigger factor binding to the ribosome. This Nostoc punctiforme (strain ATCC 29133 / PCC 73102) protein is Large ribosomal subunit protein uL23.